Here is a 201-residue protein sequence, read N- to C-terminus: Retinol-binding protein 4 (201 aa).

The first 18 residues, 1-18 (MEWVWALVLLAALGGGSA), serve as a signal peptide directing secretion. Intrachain disulfides connect C22–C178, C88–C192, and C138–C147. Position 116 (Q116) interacts with substrate. R139 carries the post-translational modification Omega-N-methylarginine.

Belongs to the calycin superfamily. Lipocalin family. As to quaternary structure, interacts with TTR. Interaction with TTR prevents its loss by filtration through the kidney glomeruli. Interacts with STRA6. As to expression, detected in blood plasma (at protein level).

Its subcellular location is the secreted. Retinol-binding protein that mediates retinol transport in blood plasma. Delivers retinol from the liver stores to the peripheral tissues. Transfers the bound all-trans retinol to STRA6, that then facilitates retinol transport across the cell membrane. The protein is Retinol-binding protein 4 (Rbp4) of Rattus norvegicus (Rat).